The following is a 199-amino-acid chain: MKQFIDFIPLILFFIVYKLEPRIVELAGHSFTFGGIFSATAVLILASLLVYGTLFLIQRRLEKGQWITLLACLVFGGMTLTFQSETFLKWKAPVVNWLFALGFAASHFIGDRPLIQRILGHAVSLPAPLWTRLNLAWVAFFVFSGCANLFVAFTFHEFWVDFKVFGSLGMTVLFLVGQGVFLARHMHEHSTESAAKSKD.

Transmembrane regions (helical) follow at residues 4-24 (FIDF…PRIV), 36-56 (IFSA…TLFL), 64-84 (GQWI…TFQS), 90-110 (WKAP…HFIG), 135-155 (LAWV…AFTF), and 162-182 (FKVF…GVFL).

This sequence belongs to the YciB family.

The protein resides in the cell inner membrane. Functionally, plays a role in cell envelope biogenesis, maintenance of cell envelope integrity and membrane homeostasis. The protein is Inner membrane-spanning protein YciB of Azotobacter vinelandii (strain DJ / ATCC BAA-1303).